We begin with the raw amino-acid sequence, 320 residues long: Cytochrome f (320 aa).

The N-terminal stretch at 1–35 (MQTKNTFSWIKKEIIRSISVSLMIYIIARTSISNA) is a signal peptide. Residues Tyr36, Cys56, Cys59, and His60 each coordinate heme. The chain crosses the membrane as a helical span at residues 286 to 306 (VQGLLFFLASVILAQIFLVLK).

It belongs to the cytochrome f family. In terms of assembly, the 4 large subunits of the cytochrome b6-f complex are cytochrome b6, subunit IV (17 kDa polypeptide, petD), cytochrome f and the Rieske protein, while the 4 small subunits are PetG, PetL, PetM and PetN. The complex functions as a dimer. Heme serves as cofactor.

It localises to the plastid. Its subcellular location is the chloroplast thylakoid membrane. Its function is as follows. Component of the cytochrome b6-f complex, which mediates electron transfer between photosystem II (PSII) and photosystem I (PSI), cyclic electron flow around PSI, and state transitions. This chain is Cytochrome f, found in Eucalyptus globulus subsp. globulus (Tasmanian blue gum).